A 273-amino-acid chain; its full sequence is MHSRTVFFVSDGTGITAETFGNAILAQFEMKPRHVRLPFVDTVDKAHQAVRQINHCGEVEGKKPIVFTTLVNMEVLKTLQDGCQGMLLDMFGTFVHPLEQELGIKSHHRVGRFSDASHSKEYSDRIAAINFSLAHDDGQSHHDLAGADVILVGVSRSGKTPTSLYLAMQCGLKTANYPLIPEDFERRQLPPALEPHRKKIFGLTIQAERLAEIRNERRPNSRYASLDNCRAEIAGAEAMMRRSSIRWLSTTTKSIEEIATTILQELRPERLVY.

ADP is bound at residue 153-160; it reads GVSRSGKT.

Belongs to the pyruvate, phosphate/water dikinase regulatory protein family. PSRP subfamily.

The catalysed reaction is [pyruvate, water dikinase] + ADP = [pyruvate, water dikinase]-phosphate + AMP + H(+). The enzyme catalyses [pyruvate, water dikinase]-phosphate + phosphate + H(+) = [pyruvate, water dikinase] + diphosphate. Its function is as follows. Bifunctional serine/threonine kinase and phosphorylase involved in the regulation of the phosphoenolpyruvate synthase (PEPS) by catalyzing its phosphorylation/dephosphorylation. This is Putative phosphoenolpyruvate synthase regulatory protein from Verminephrobacter eiseniae (strain EF01-2).